We begin with the raw amino-acid sequence, 720 residues long: Long chain acyl-CoA synthetase 8 (720 aa).

Residue M1 is modified to N-acetylmethionine. 279-290 (IMFTSGSTGLPK) contributes to the ATP binding site. Positions 554–582 (DEKGTRWFYTGDIGRFHPDGCLEVIDRKK) are fatty acid-binding.

It belongs to the ATP-dependent AMP-binding enzyme family. It depends on Mg(2+) as a cofactor.

The catalysed reaction is a long-chain fatty acid + ATP + CoA = a long-chain fatty acyl-CoA + AMP + diphosphate. It participates in lipid metabolism; fatty acid metabolism. Functionally, activation of long-chain fatty acids for both synthesis of cellular lipids, and degradation via beta-oxidation. Preferentially uses palmitate, palmitoleate, oleate and linoleate. The sequence is that of Long chain acyl-CoA synthetase 8 (LACS8) from Arabidopsis thaliana (Mouse-ear cress).